Here is a 277-residue protein sequence, read N- to C-terminus: Small ribosomal subunit protein uS2 (277 aa).

A disordered region spans residues 247 to 277 (LSAFESSQDDESDEENREEDLLAKKFDGEAN). Positions 253–264 (SQDDESDEENRE) are enriched in acidic residues. Residues 265–277 (EDLLAKKFDGEAN) are compositionally biased toward basic and acidic residues.

It belongs to the universal ribosomal protein uS2 family.

The polypeptide is Small ribosomal subunit protein uS2 (rpsB) (Chlamydia pneumoniae (Chlamydophila pneumoniae)).